Reading from the N-terminus, the 100-residue chain is Large ribosomal subunit protein bL27 (100 aa).

Positions 1–13 (MNKLYWLTDLQLF) are excised as a propeptide. The span at 18 to 29 (GVDSSKNGRDSN) shows a compositional bias: basic and acidic residues. The disordered stretch occupies residues 18–39 (GVDSSKNGRDSNPKYLGAKLGD).

It belongs to the bacterial ribosomal protein bL27 family. Post-translationally, the N-terminus is cleaved by ribosomal processing cysteine protease Prp.

The polypeptide is Large ribosomal subunit protein bL27 (Ureaplasma urealyticum serovar 10 (strain ATCC 33699 / Western)).